The following is a 231-amino-acid chain: Nitrate reductase [NAD(P)H] (231 aa).

Residues 1-85 (PQKLGLPVGR…KGPHRHIEYT (85 aa)) enclose the FAD-binding FR-type domain. FAD is bound by residues 25-28 (RAYT), 42-46 (LIKIY), Phe47, 59-61 (LMS), and Thr112.

This sequence belongs to the nitrate reductase family. As to quaternary structure, homodimer. It depends on FAD as a cofactor. Requires heme as cofactor. Mo-molybdopterin is required as a cofactor.

The catalysed reaction is nitrite + NAD(+) + H2O = nitrate + NADH + H(+). The enzyme catalyses nitrite + NADP(+) + H2O = nitrate + NADPH + H(+). Its function is as follows. Nitrate reductase is a key enzyme involved in the first step of nitrate assimilation in plants, fungi and bacteria. The sequence is that of Nitrate reductase [NAD(P)H] (NAR) from Zea mays (Maize).